Reading from the N-terminus, the 442-residue chain is Adenylosuccinate synthetase (442 aa).

Residues 25 to 31, 53 to 55, and K62 contribute to the GTP site; these read GDEGKGK and GHT. D26 acts as the Proton acceptor in catalysis. Mg(2+) contacts are provided by D26 and G53. IMP contacts are provided by residues 26 to 29 and 51 to 54; these read DEGK and NAGH. H54 functions as the Proton donor in the catalytic mechanism. Residues T141, R155, N232, and T247 each coordinate IMP. T307 serves as a coordination point for GTP. 307–313 is a binding site for substrate; the sequence is TTTKRPR. R311 contributes to the IMP binding site. GTP-binding positions include R313, 339–341, and 425–427; these read KLD and GVG.

This sequence belongs to the adenylosuccinate synthetase family. As to quaternary structure, homodimer. Mg(2+) is required as a cofactor.

Its subcellular location is the cytoplasm. The enzyme catalyses IMP + L-aspartate + GTP = N(6)-(1,2-dicarboxyethyl)-AMP + GDP + phosphate + 2 H(+). Its pathway is purine metabolism; AMP biosynthesis via de novo pathway; AMP from IMP: step 1/2. Its activity is regulated as follows. Inhibited by hadacidin. Activated by fructose 1,6-bisphosphate. Functionally, plays an important role in the salvage pathway for purine nucleotide biosynthesis. Catalyzes the first committed step in the biosynthesis of AMP from IMP. This chain is Adenylosuccinate synthetase (Adss), found in Plasmodium falciparum.